A 132-amino-acid polypeptide reads, in one-letter code: Nuclear transition protein 2 (132 aa).

A compositionally biased stretch (polar residues) spans 1-20 (MDTKTQSLPNTHAQPHSNSR). Residues 1–132 (MDTKTQSLPN…KRQSSGRKYN (132 aa)) form a disordered region. Zn(2+) contacts are provided by His-12, His-16, His-24, Cys-29, Cys-31, and Cys-35. Positions 37–59 (SRSRSRSCRSRSSSRRPRSHRSP) are enriched in basic residues. Polar residues predominate over residues 82 to 94 (SHQCPSRPVTHSC). A Nuclear localization signal motif is present at residues 105–113 (GKVIKRKQV). The span at 108–132 (IKRKQVKRSKQVYKRKRQSSGRKYN) shows a compositional bias: basic residues. The residue at position 127 (Ser-127) is a Phosphoserine.

Belongs to the nuclear transition protein 2 family. In terms of tissue distribution, testis.

The protein resides in the nucleus. It is found in the nucleolus. The protein localises to the chromosome. Functionally, plays a key role in the replacement of histones to protamine in the elongating spermatids of mammals. In condensing spermatids, loaded onto the nucleosomes, where it promotes the recruitment and processing of protamines, which are responsible for histone eviction. The polypeptide is Nuclear transition protein 2 (TNP2) (Bos taurus (Bovine)).